The chain runs to 425 residues: UPF0597 protein VIBHAR_03081 (425 aa).

This sequence belongs to the UPF0597 family.

This chain is UPF0597 protein VIBHAR_03081, found in Vibrio campbellii (strain ATCC BAA-1116).